Consider the following 398-residue polypeptide: MNASSVVQPLLTRGMKAVLVSQFFSAFADNALLFAILAQLKAQFYPDWSQPILQIVFVLAYILLAPFVGQIADRFPKDRVMLFANSFKLLGAFTICLGYDPFLGYALVGVGAASYSPAKYGILVELTDGDRLVKANGLMEASTIIAILTGSVVGGFLSDWNLAIALLVCALMYGIAVVANFFIPRLSAVRRDKGWNLKKMLTDFASACCILWHNKGARFSLIGTSLFWGAGITLRFLLVLWVPVVLGISDNSTPTILNVMVAVGIIIGAGAAARFITLKTVHRCMPAGVLIGVMVVIFAVQHSIWASYVLLIILGIFGGLFIVPLNALLQESGRQTIGVGYAIAVQNLGENIAMLLMLGLYSLVIKIGVPVVTTGIGFGTLLALTITSLWIWNRFQRN.

11 helical membrane-spanning segments follow: residues Ala-17–Leu-37, Ile-52–Ala-72, Leu-90–Val-110, Gly-137–Leu-157, Ala-163–Ile-183, Leu-226–Leu-246, Ile-256–Ile-276, Met-285–Trp-305, Val-309–Leu-329, Ile-352–Val-372, and Thr-373–Asn-393.

Belongs to the major facilitator superfamily. LplT (TC 2.A.1.42) family.

It is found in the cell inner membrane. Functionally, catalyzes the facilitated diffusion of 2-acyl-glycero-3-phosphoethanolamine (2-acyl-GPE) into the cell. The protein is Lysophospholipid transporter LplT of Photorhabdus laumondii subsp. laumondii (strain DSM 15139 / CIP 105565 / TT01) (Photorhabdus luminescens subsp. laumondii).